A 458-amino-acid chain; its full sequence is GDP-fucose protein O-fucosyltransferase 3 (458 aa).

Topologically, residues 1–11 (MRRISVKKLCS) are cytoplasmic. The helical; Signal-anchor for type II membrane protein transmembrane segment at 12 to 32 (FCLCACAFAFLVMTFQVIELL) threads the bilayer. The Lumenal segment spans residues 33–458 (GQFEQTEHRQ…TQFWREVFTD (426 aa)). 3 N-linked (GlcNAc...) asparagine glycosylation sites follow: Asn-92, Asn-150, and Asn-300. A disulfide bond links Cys-371 and Cys-374. Residue Asn-445 is glycosylated (N-linked (GlcNAc...) asparagine).

It belongs to the glycosyltransferase 10 family.

It localises to the endoplasmic reticulum membrane. The enzyme catalyses L-threonyl-[protein] + GDP-beta-L-fucose = 3-O-(alpha-L-fucosyl)-L-threonyl-[protein] + GDP + H(+). The catalysed reaction is L-seryl-[protein] + GDP-beta-L-fucose = 3-O-(alpha-L-fucosyl)-L-seryl-[protein] + GDP + H(+). Its pathway is protein modification; protein glycosylation. In terms of biological role, protein O-fucosyltransferase that specifically catalyzes O-fucosylation of serine or threonine residues in EMI domains of target proteins. Attaches fucose through an O-glycosidic linkage. O-fucosylation of EMI domain-containing proteins may be required for facilitating protein folding and secretion. This is GDP-fucose protein O-fucosyltransferase 3 (fut10) from Danio rerio (Zebrafish).